A 361-amino-acid chain; its full sequence is NudC domain-containing protein 3 (361 aa).

The span at 87–97 (KIRRKEEEEAK) shows a compositional bias: basic and acidic residues. The disordered stretch occupies residues 87 to 106 (KIRRKEEEEAKTVSAAAAEK). Residue serine 146 is modified to Phosphoserine. In terms of domain architecture, CS spans 185-277 (AVRENYTWSQ…VGEYWWNAIL (93 aa)). Phosphoserine is present on residues serine 340 and serine 355.

The chain is NudC domain-containing protein 3 (NUDCD3) from Pongo abelii (Sumatran orangutan).